The sequence spans 278 residues: Acyl-[acyl-carrier-protein]--UDP-N-acetylglucosamine O-acyltransferase (278 aa).

This sequence belongs to the transferase hexapeptide repeat family. LpxA subfamily. Homotrimer.

The protein localises to the cytoplasm. The catalysed reaction is a (3R)-hydroxyacyl-[ACP] + UDP-N-acetyl-alpha-D-glucosamine = a UDP-3-O-[(3R)-3-hydroxyacyl]-N-acetyl-alpha-D-glucosamine + holo-[ACP]. It functions in the pathway glycolipid biosynthesis; lipid IV(A) biosynthesis; lipid IV(A) from (3R)-3-hydroxytetradecanoyl-[acyl-carrier-protein] and UDP-N-acetyl-alpha-D-glucosamine: step 1/6. Functionally, involved in the biosynthesis of lipid A, a phosphorylated glycolipid that anchors the lipopolysaccharide to the outer membrane of the cell. The protein is Acyl-[acyl-carrier-protein]--UDP-N-acetylglucosamine O-acyltransferase of Brucella anthropi (strain ATCC 49188 / DSM 6882 / CCUG 24695 / JCM 21032 / LMG 3331 / NBRC 15819 / NCTC 12168 / Alc 37) (Ochrobactrum anthropi).